The primary structure comprises 1409 residues: DNA-directed RNA polymerase subunit beta' (1409 aa).

Zn(2+)-binding residues include C70, C72, C85, and C88. Mg(2+) is bound by residues D461, D463, and D465. C820, C894, C901, and C904 together coordinate Zn(2+).

This sequence belongs to the RNA polymerase beta' chain family. As to quaternary structure, the RNAP catalytic core consists of 2 alpha, 1 beta, 1 beta' and 1 omega subunit. When a sigma factor is associated with the core the holoenzyme is formed, which can initiate transcription. Mg(2+) serves as cofactor. Requires Zn(2+) as cofactor.

The catalysed reaction is RNA(n) + a ribonucleoside 5'-triphosphate = RNA(n+1) + diphosphate. Its function is as follows. DNA-dependent RNA polymerase catalyzes the transcription of DNA into RNA using the four ribonucleoside triphosphates as substrates. The protein is DNA-directed RNA polymerase subunit beta' of Ralstonia nicotianae (strain ATCC BAA-1114 / GMI1000) (Ralstonia solanacearum).